The chain runs to 312 residues: Olfactory receptor 1F1 (312 aa).

At 1-25 the chain is on the extracellular side; that stretch reads MSGTNQSSVSEFLLLGLSRQPQQQH. Residue asparagine 5 is glycosylated (N-linked (GlcNAc...) asparagine). The chain crosses the membrane as a helical span at residues 26 to 49; sequence LLFVFFLSMYLATVLGNLLIILSV. Over 50 to 57 the chain is Cytoplasmic; it reads SIDSCLHT. The chain crosses the membrane as a helical span at residues 58–79; it reads PMYFFLSNLSFVDICFSFTTVP. At 80 to 100 the chain is on the extracellular side; it reads KMLANHILETQTISFCGCLTQ. Cysteine 97 and cysteine 189 are oxidised to a cystine. A helical transmembrane segment spans residues 101-120; it reads MYFVFMFVDMDNFLLAVMAY. At 121 to 139 the chain is on the cytoplasmic side; sequence DHFVAVCHPLHYTAKMTHQ. A helical transmembrane segment spans residues 140-158; that stretch reads LCALLVAGLWVVANLNVLL. Residues 159 to 196 lie on the Extracellular side of the membrane; sequence HTLLMAPLSFCADNAITHFFCDVTPLLKLSCSDTHLNE. A helical transmembrane segment spans residues 197–219; that stretch reads VIILSEGALVMITPFLCILASYM. The Cytoplasmic segment spans residues 220–236; sequence HITCTVLKVPSTKGRWK. A helical membrane pass occupies residues 237–259; that stretch reads AFSTCGSHLAVVLLFYSTIIAVY. At 260 to 272 the chain is on the extracellular side; it reads FNPLSSHSAEKDT. Residues 273–292 form a helical membrane-spanning segment; that stretch reads MATVLYTVVTPMLNPFIYSL. Residues 293–312 are Cytoplasmic-facing; sequence RNRYLKGALKKVVGRVVFSV.

Belongs to the G-protein coupled receptor 1 family.

It is found in the cell membrane. Its function is as follows. Odorant receptor. The polypeptide is Olfactory receptor 1F1 (OR1F1) (Homo sapiens (Human)).